Here is a 142-residue protein sequence, read N- to C-terminus: ATP synthase F(0) complex subunit C3, mitochondrial (142 aa).

The N-terminal 67 residues, 1–67, are a transit peptide targeting the mitochondrion; the sequence is MFACAKLACT…REFQTSAISR (67 aa). Residues 83–103 form a helical membrane-spanning segment; that stretch reads VGVAGSGAGIGTVFGSLIIGY. Position 110 is an N6,N6,N6-trimethyllysine (K110). A helical transmembrane segment spans residues 118–138; sequence ILGFALSEAMGLFCLMVAFLI.

This sequence belongs to the ATPase C chain family. F-type ATPases have 2 components, CF(1) - the catalytic core - and CF(0) - the membrane proton channel. CF(1) has five subunits: alpha(3), beta(3), gamma(1), delta(1), epsilon(1). CF(0) has three main subunits: a, b and c. Interacts with TMEM70 and TMEM242. Post-translationally, trimethylated by ATPSCKMT at Lys-110. Methylation is required for proper incorporation of the C subunit into the ATP synthase complex and mitochondrial respiration.

Its subcellular location is the mitochondrion membrane. In terms of biological role, mitochondrial membrane ATP synthase (F(1)F(0) ATP synthase or Complex V) produces ATP from ADP in the presence of a proton gradient across the membrane which is generated by electron transport complexes of the respiratory chain. F-type ATPases consist of two structural domains, F(1) - containing the extramembraneous catalytic core and F(0) - containing the membrane proton channel, linked together by a central stalk and a peripheral stalk. During catalysis, ATP synthesis in the catalytic domain of F(1) is coupled via a rotary mechanism of the central stalk subunits to proton translocation. Part of the complex F(0) domain. A homomeric c-ring of probably 10 subunits is part of the complex rotary element. The chain is ATP synthase F(0) complex subunit C3, mitochondrial from Pongo abelii (Sumatran orangutan).